The primary structure comprises 176 residues: Peptidyl-prolyl cis-trans isomerase cyp5 (176 aa).

In terms of domain architecture, PPIase cyclophilin-type spans 10 to 173 (FFDVAVNGKP…AKVEIVDCGE (164 aa)).

The protein belongs to the cyclophilin-type PPIase family.

It carries out the reaction [protein]-peptidylproline (omega=180) = [protein]-peptidylproline (omega=0). PPIases accelerate the folding of proteins. It catalyzes the cis-trans isomerization of proline imidic peptide bonds in oligopeptides. This is Peptidyl-prolyl cis-trans isomerase cyp5 (cyp5) from Rhizopus delemar (strain RA 99-880 / ATCC MYA-4621 / FGSC 9543 / NRRL 43880) (Mucormycosis agent).